Consider the following 250-residue polypeptide: Proteasome subunit alpha (250 aa).

This sequence belongs to the peptidase T1A family. The 20S proteasome core is composed of 14 alpha and 14 beta subunits that assemble into four stacked heptameric rings, resulting in a barrel-shaped structure. The two inner rings, each composed of seven catalytic beta subunits, are sandwiched by two outer rings, each composed of seven alpha subunits. The catalytic chamber with the active sites is on the inside of the barrel. Has a gated structure, the ends of the cylinder being occluded by the N-termini of the alpha-subunits. Is capped by the proteasome-associated ATPase, ARC.

The protein localises to the cytoplasm. Its pathway is protein degradation; proteasomal Pup-dependent pathway. With respect to regulation, the formation of the proteasomal ATPase ARC-20S proteasome complex, likely via the docking of the C-termini of ARC into the intersubunit pockets in the alpha-rings, may trigger opening of the gate for substrate entry. Interconversion between the open-gate and close-gate conformations leads to a dynamic regulation of the 20S proteasome proteolysis activity. In terms of biological role, component of the proteasome core, a large protease complex with broad specificity involved in protein degradation. This Mycobacterium sp. (strain JLS) protein is Proteasome subunit alpha.